The sequence spans 202 residues: GTP cyclohydrolase 1 (202 aa).

Cysteine 90, histidine 93, and cysteine 163 together coordinate Zn(2+).

Belongs to the GTP cyclohydrolase I family. In terms of assembly, homomer.

The enzyme catalyses GTP + H2O = 7,8-dihydroneopterin 3'-triphosphate + formate + H(+). Its pathway is cofactor biosynthesis; 7,8-dihydroneopterin triphosphate biosynthesis; 7,8-dihydroneopterin triphosphate from GTP: step 1/1. The polypeptide is GTP cyclohydrolase 1 (Mycobacterium marinum (strain ATCC BAA-535 / M)).